The sequence spans 320 residues: Acetyl-coenzyme A carboxylase carboxyl transferase subunit alpha (320 aa).

The 254-residue stretch at 42-295 (IEEKALAALT…GDAIAKSFAD (254 aa)) folds into the CoA carboxyltransferase C-terminal domain.

The protein belongs to the AccA family. As to quaternary structure, acetyl-CoA carboxylase is a heterohexamer composed of biotin carboxyl carrier protein (AccB), biotin carboxylase (AccC) and two subunits each of ACCase subunit alpha (AccA) and ACCase subunit beta (AccD).

It localises to the cytoplasm. The enzyme catalyses N(6)-carboxybiotinyl-L-lysyl-[protein] + acetyl-CoA = N(6)-biotinyl-L-lysyl-[protein] + malonyl-CoA. The protein operates within lipid metabolism; malonyl-CoA biosynthesis; malonyl-CoA from acetyl-CoA: step 1/1. Its function is as follows. Component of the acetyl coenzyme A carboxylase (ACC) complex. First, biotin carboxylase catalyzes the carboxylation of biotin on its carrier protein (BCCP) and then the CO(2) group is transferred by the carboxyltransferase to acetyl-CoA to form malonyl-CoA. This Rhodopseudomonas palustris (strain BisA53) protein is Acetyl-coenzyme A carboxylase carboxyl transferase subunit alpha.